We begin with the raw amino-acid sequence, 73 residues long: UPF0154 protein BcerKBAB4_3367 (73 aa).

The chain crosses the membrane as a helical span at residues 4–24 (WLGILVGVVALVAGVALGFFI).

Belongs to the UPF0154 family.

It localises to the cell membrane. The polypeptide is UPF0154 protein BcerKBAB4_3367 (Bacillus mycoides (strain KBAB4) (Bacillus weihenstephanensis)).